We begin with the raw amino-acid sequence, 674 residues long: Kinesin-like protein KIFC1 (674 aa).

3 positions are modified to phosphoserine: Ser-28, Ser-33, and Ser-35. A disordered region spans residues 66–96 (TSRPRGPLLSTVSQTQGHTAAQKGPKKTGPR). Polar residues predominate over residues 75 to 84 (STVSQTQGHT). The stretch at 146 to 315 (DLNEELKRYR…QELKGNIRVF (170 aa)) forms a coiled coil. Residues 311–664 (NIRVFCRVRP…LRFASKVNQC (354 aa)) form the Kinesin motor domain. Positions 327–366 (TPSPGFLVFPPGPAGPSDPPTGLSLSRSDDRRSTLTGAPA) are disordered. A compositionally biased stretch (pro residues) spans 336-345 (PPGPAGPSDP). Residue Thr-360 is modified to Phosphothreonine. 411 to 418 (GQTGSGKT) contributes to the ATP binding site.

It belongs to the TRAFAC class myosin-kinesin ATPase superfamily. Kinesin family. NCD subfamily. In terms of assembly, binds NUBP1 and NUBP2. Interacts with PPP1R42. As to expression, highly expressed in 14 dpc embryos, spleen and NIH3T3 cells. Also expressed in testis, brain, lung, kidney and cultured astrocytes. Very low levels in skeletal muscle and heart.

The protein resides in the nucleus. It is found in the cytoplasm. Its subcellular location is the cytoskeleton. The protein localises to the microtubule organizing center. It localises to the centrosome. The protein resides in the spindle. It is found in the early endosome. In terms of biological role, minus end-directed microtubule-dependent motor required for bipolar spindle formation. May contribute to movement of early endocytic vesicles. Regulates cilium formation and structure. This Mus musculus (Mouse) protein is Kinesin-like protein KIFC1.